A 180-amino-acid chain; its full sequence is Protein C2-DOMAIN ABA-RELATED 10 (180 aa).

In terms of domain architecture, C2 spans 1–105 (MDQKPLGLLT…EALKMGMELL (105 aa)). Ca(2+) contacts are provided by R22, D23, D28, D74, W75, D76, and D82.

Belongs to the plant CAR protein family. Binds to PYR/PYL/RCAR abscisic acid intracellular receptors in an ABA-independent manner, both at the plasma membrane and in the nucleus.

It is found in the cell membrane. The protein resides in the nucleus. In terms of biological role, stimulates the GTPase/ATPase activities of Obg-like ATPases. Mediates the transient calcium-dependent interaction of PYR/PYL/RCAR abscisic acid (ABA) receptors with the plasma membrane and thus regulates ABA sensitivity. The chain is Protein C2-DOMAIN ABA-RELATED 10 from Arabidopsis thaliana (Mouse-ear cress).